The sequence spans 520 residues: Cytochrome P450 716A67 (520 aa).

A helical transmembrane segment spans residues 4 to 24 (SLAIYYGIILITVTLGLVYTW). C466 serves as a coordination point for heme.

This sequence belongs to the cytochrome P450 family. It depends on heme as a cofactor.

The protein localises to the membrane. Its function is as follows. Catalyzes hydroxylation at the C-2 position of different intermediates of the hemolytic sapogenin biosynthetic pathway downstream of oleanolic acid synthesis. In Medicago truncatula (Barrel medic), this protein is Cytochrome P450 716A67.